We begin with the raw amino-acid sequence, 192 residues long: Ubiquitin-conjugating enzyme E2 T (192 aa).

Residues 2 to 152 form the UBC core domain; it reads QRVSRLKREL…AKKWTEKHAL (151 aa). The Glycyl thioester intermediate role is filled by cysteine 86. A disordered region spans residues 150–192; sequence HALPAPQGSDKESQEKSGSSEGTSHKRKSAEIAEESKKPCREP. Positions 178 to 192 are enriched in basic and acidic residues; it reads SAEIAEESKKPCREP.

The protein belongs to the ubiquitin-conjugating enzyme family.

Its subcellular location is the nucleus. The enzyme catalyses S-ubiquitinyl-[E1 ubiquitin-activating enzyme]-L-cysteine + [E2 ubiquitin-conjugating enzyme]-L-cysteine = [E1 ubiquitin-activating enzyme]-L-cysteine + S-ubiquitinyl-[E2 ubiquitin-conjugating enzyme]-L-cysteine.. Its pathway is protein modification; protein ubiquitination. Its function is as follows. Accepts ubiquitin from the E1 complex and catalyzes its covalent attachment to other proteins. Catalyzes monoubiquitination. Involved in DNA repair. This Xenopus laevis (African clawed frog) protein is Ubiquitin-conjugating enzyme E2 T (ube2t).